Reading from the N-terminus, the 338-residue chain is Phosphoribosylformylglycinamidine cyclo-ligase (338 aa).

This sequence belongs to the AIR synthase family.

The protein resides in the cytoplasm. The catalysed reaction is 2-formamido-N(1)-(5-O-phospho-beta-D-ribosyl)acetamidine + ATP = 5-amino-1-(5-phospho-beta-D-ribosyl)imidazole + ADP + phosphate + H(+). It functions in the pathway purine metabolism; IMP biosynthesis via de novo pathway; 5-amino-1-(5-phospho-D-ribosyl)imidazole from N(2)-formyl-N(1)-(5-phospho-D-ribosyl)glycinamide: step 2/2. The chain is Phosphoribosylformylglycinamidine cyclo-ligase from Lactococcus lactis subsp. lactis (strain IL1403) (Streptococcus lactis).